Consider the following 92-residue polypeptide: RQC P-site tRNA stabilizing factor (92 aa).

An S4 RNA-binding domain is found at 5-65 (MRLDKYLKVS…GPKIVTAKIE (61 aa)).

This sequence belongs to the RqcP family. Associates with stalled 50S ribosomal subunits. Binds to RqcH, 23S rRNA and the P-site tRNA. Does not require RqcH for association with 50S subunits.

Functionally, key component of the ribosome quality control system (RQC), a ribosome-associated complex that mediates the extraction of incompletely synthesized nascent chains from stalled ribosomes and their subsequent degradation. RqcH recruits Ala-charged tRNA, and with RqcP directs the elongation of stalled nascent chains on 50S ribosomal subunits, leading to non-templated C-terminal alanine extensions (Ala tail). The Ala tail promotes nascent chain degradation. RqcP is associated with the translocation-like movement of the peptidyl-tRNA from the A-site into the P-site. The protein is RQC P-site tRNA stabilizing factor of Listeria monocytogenes serovar 1/2a (strain ATCC BAA-679 / EGD-e).